Consider the following 502-residue polypeptide: Glycerol kinase (502 aa).

Position 13 (Thr-13) interacts with ADP. Residues Thr-13, Thr-14, and Ser-15 each contribute to the ATP site. A sn-glycerol 3-phosphate-binding site is contributed by Thr-13. Residue Arg-17 coordinates ADP. Residues Arg-83, Glu-84, Tyr-136, and Asp-246 each coordinate sn-glycerol 3-phosphate. Residues Arg-83, Glu-84, Tyr-136, Asp-246, and Gln-247 each contribute to the glycerol site. Residues Thr-268 and Gly-311 each coordinate ADP. 4 residues coordinate ATP: Thr-268, Gly-311, Gln-315, and Gly-412. The ADP site is built by Gly-412 and Asn-416.

Belongs to the FGGY kinase family.

The enzyme catalyses glycerol + ATP = sn-glycerol 3-phosphate + ADP + H(+). It functions in the pathway polyol metabolism; glycerol degradation via glycerol kinase pathway; sn-glycerol 3-phosphate from glycerol: step 1/1. With respect to regulation, inhibited by fructose 1,6-bisphosphate (FBP). Its function is as follows. Key enzyme in the regulation of glycerol uptake and metabolism. Catalyzes the phosphorylation of glycerol to yield sn-glycerol 3-phosphate. The sequence is that of Glycerol kinase from Francisella tularensis subsp. tularensis (strain WY96-3418).